The following is a 174-amino-acid chain: MKIGPVGKHDARSTTIVNWDEGSHDGFIYQIFLSHGVAGIMSIQFQFVMDGKLVLSDRHGPCSGDMFDVIELNYPHEYITGISGEYYKYEANIPHMRSLKFNTNTSEYGPFGTSGSSNDKFAFKLGKSPQFGGFHGTYDASGLQYIGVYLRPKTVLPKIDTGNAEETESKIVLG.

In terms of domain architecture, Jacalin-type lectin spans 1–152 (MKIGPVGKHD…LQYIGVYLRP (152 aa)).

The protein belongs to the jacalin lectin family. As to quaternary structure, self-interacts. Interacts with RTM3.

The protein localises to the cytoplasm. Unable to mediate restriction of long-distance movement of the pathogenic tobacco etch virus (TEV) without causing a hypersensitive response or inducing systemic acquired resistance. This Arabidopsis thaliana (Mouse-ear cress) protein is Inactive protein RESTRICTED TEV MOVEMENT 1 (RTM1).